We begin with the raw amino-acid sequence, 78 residues long: Ubiquitin-like protein 1 (78 aa).

It belongs to the ubiquitin family.

The polypeptide is Ubiquitin-like protein 1 (ubl1) (Schizosaccharomyces pombe (strain 972 / ATCC 24843) (Fission yeast)).